Consider the following 607-residue polypeptide: Isocitrate dehydrogenase kinase/phosphatase (607 aa).

ATP-binding positions include 328 to 334 (APGIKGL) and Lys349. Asp384 is an active-site residue.

The protein belongs to the AceK family.

Its subcellular location is the cytoplasm. The enzyme catalyses L-seryl-[isocitrate dehydrogenase] + ATP = O-phospho-L-seryl-[isocitrate dehydrogenase] + ADP + H(+). Its function is as follows. Bifunctional enzyme which can phosphorylate or dephosphorylate isocitrate dehydrogenase (IDH) on a specific serine residue. This is a regulatory mechanism which enables bacteria to bypass the Krebs cycle via the glyoxylate shunt in response to the source of carbon. When bacteria are grown on glucose, IDH is fully active and unphosphorylated, but when grown on acetate or ethanol, the activity of IDH declines drastically concomitant with its phosphorylation. The sequence is that of Isocitrate dehydrogenase kinase/phosphatase from Cupriavidus metallidurans (strain ATCC 43123 / DSM 2839 / NBRC 102507 / CH34) (Ralstonia metallidurans).